Here is a 437-residue protein sequence, read N- to C-terminus: Glucose-1-phosphate adenylyltransferase (437 aa).

Alpha-D-glucose 1-phosphate contacts are provided by residues tyrosine 113, glycine 179, 194-195 (EK), and serine 212.

Belongs to the bacterial/plant glucose-1-phosphate adenylyltransferase family. In terms of assembly, homotetramer.

The enzyme catalyses alpha-D-glucose 1-phosphate + ATP + H(+) = ADP-alpha-D-glucose + diphosphate. It functions in the pathway glycan biosynthesis; glycogen biosynthesis. Involved in the biosynthesis of ADP-glucose, a building block required for the elongation reactions to produce glycogen. Catalyzes the reaction between ATP and alpha-D-glucose 1-phosphate (G1P) to produce pyrophosphate and ADP-Glc. This chain is Glucose-1-phosphate adenylyltransferase, found in Haemophilus influenzae (strain ATCC 51907 / DSM 11121 / KW20 / Rd).